Consider the following 126-residue polypeptide: Small ribosomal subunit protein uS12 (126 aa).

The disordered stretch occupies residues 1-23 (MPTISQLVRKGRKTVASKSTAPA). 3-methylthioaspartic acid is present on aspartate 89.

This sequence belongs to the universal ribosomal protein uS12 family. Part of the 30S ribosomal subunit. Contacts proteins S8 and S17. May interact with IF1 in the 30S initiation complex.

Functionally, with S4 and S5 plays an important role in translational accuracy. In terms of biological role, interacts with and stabilizes bases of the 16S rRNA that are involved in tRNA selection in the A site and with the mRNA backbone. Located at the interface of the 30S and 50S subunits, it traverses the body of the 30S subunit contacting proteins on the other side and probably holding the rRNA structure together. The combined cluster of proteins S8, S12 and S17 appears to hold together the shoulder and platform of the 30S subunit. This Clostridium perfringens (strain ATCC 13124 / DSM 756 / JCM 1290 / NCIMB 6125 / NCTC 8237 / Type A) protein is Small ribosomal subunit protein uS12.